The sequence spans 732 residues: Catalase-peroxidase (732 aa).

Positions 1–15 (MSTESKCPFAGGAYA) are cleaved as a signal peptide. The segment at residues 96-219 (WHSAGTYRIY…LGAVQMGLIY (124 aa)) is a cross-link (tryptophyl-tyrosyl-methioninium (Trp-Tyr) (with M-245)). Histidine 97 serves as the catalytic Proton acceptor. The tryptophyl-tyrosyl-methioninium (Tyr-Met) (with W-96) cross-link spans 219 to 245 (YVNPEGPNGNPDPLASARDIRETFARM). Histidine 260 is a binding site for heme b.

The protein belongs to the peroxidase family. Peroxidase/catalase subfamily. Homodimer or homotetramer. Heme b serves as cofactor. Post-translationally, formation of the three residue Trp-Tyr-Met cross-link is important for the catalase, but not the peroxidase activity of the enzyme.

The catalysed reaction is H2O2 + AH2 = A + 2 H2O. It catalyses the reaction 2 H2O2 = O2 + 2 H2O. In terms of biological role, bifunctional enzyme with both catalase and broad-spectrum peroxidase activity. This Acidobacterium capsulatum (strain ATCC 51196 / DSM 11244 / BCRC 80197 / JCM 7670 / NBRC 15755 / NCIMB 13165 / 161) protein is Catalase-peroxidase.